The sequence spans 572 residues: MRTSQYLLSTLKETPADAEVISHQLMLRAGMIRKLASGLYTWLPTGVRVLKKVENIVREEMNNAGAIEVSMPVVQPADLWQESGRWEQYGPELLRFVDRGERPFVLGPTHEEVITDLIRNELSSYKQLPLNFYQIQTKFRDEVRPRFGVMRSREFLMKDAYSFHTSQESLQETYDAMYAAYSKIFSRMGLDFRAVQADTGSIGGSASHEFQVLAQSGEDDVVFSDTSDYAANIELAEAIAPKEPRAAATQEMTLVDTPNAKTIAELVEQFNLPIEKTVKTLLVKAVEGSSFPLVALLVRGDHELNEVKAEKLPQVASPLTFATEEEIRAVVKAGPGSLGPVNMPIPVVIDRTVAAMSDFAAGANIDGKHYFGINWDRDVATPEVADIRNVVAGDPSPDGQGTLLIKRGIEVGHIFQLGTKYSEALKASVQGEDGRNQILTMGCYGIGVTRVVAAAIEQNYDERGIVWPDAIAPFQVAILPMNMHKSFRVQELAEKLYSELRAQGIEVLLDDRKERPGVMFADMELIGIPHTIVLGDRNLDNDDIEYKYRRNGEKQLIKTGDIVEYLVKQIKG.

The protein belongs to the class-II aminoacyl-tRNA synthetase family. ProS type 1 subfamily. Homodimer.

It is found in the cytoplasm. The enzyme catalyses tRNA(Pro) + L-proline + ATP = L-prolyl-tRNA(Pro) + AMP + diphosphate. Catalyzes the attachment of proline to tRNA(Pro) in a two-step reaction: proline is first activated by ATP to form Pro-AMP and then transferred to the acceptor end of tRNA(Pro). As ProRS can inadvertently accommodate and process non-cognate amino acids such as alanine and cysteine, to avoid such errors it has two additional distinct editing activities against alanine. One activity is designated as 'pretransfer' editing and involves the tRNA(Pro)-independent hydrolysis of activated Ala-AMP. The other activity is designated 'posttransfer' editing and involves deacylation of mischarged Ala-tRNA(Pro). The misacylated Cys-tRNA(Pro) is not edited by ProRS. This Escherichia coli O9:H4 (strain HS) protein is Proline--tRNA ligase.